The following is a 470-amino-acid chain: Neuraminidase (470 aa).

The Intravirion portion of the chain corresponds to Met1–Lys6. A helical membrane pass occupies residues Ile7–Gly27. The segment at Gly11 to Trp33 is involved in apical transport and lipid raft association. The Virion surface segment spans residues Asn28–Lys470. Positions His36–Ser90 are hypervariable stalk region. N-linked (GlcNAc...) asparagine; by host glycosylation is found at Asn44, Asn58, Asn63, Asn70, and Asn88. The head of neuraminidase stretch occupies residues Leu91–Lys470. Intrachain disulfides connect Cys92–Cys417, Cys124–Cys129, Cys184–Cys231, Cys233–Cys238, Cys279–Cys292, Cys281–Cys290, Cys318–Cys335, and Cys421–Cys447. Position 118 (Arg118) interacts with substrate. N-linked (GlcNAc...) asparagine; by host glycosylation occurs at Asn146. Asp151 (proton donor/acceptor) is an active-site residue. Arg152 contacts substrate. The N-linked (GlcNAc...) asparagine; by host glycan is linked to Asn235. Glu277–Glu278 contributes to the substrate binding site. Arg293 contacts substrate. 3 residues coordinate Ca(2+): Asp294, Gly298, and Asp324. Arg368 is a substrate binding site. Tyr402 acts as the Nucleophile in catalysis. Residues Asn434 and Asn455 are each glycosylated (N-linked (GlcNAc...) asparagine; by host).

This sequence belongs to the glycosyl hydrolase 34 family. As to quaternary structure, homotetramer. Ca(2+) serves as cofactor. In terms of processing, N-glycosylated.

Its subcellular location is the virion membrane. The protein localises to the host apical cell membrane. It catalyses the reaction Hydrolysis of alpha-(2-&gt;3)-, alpha-(2-&gt;6)-, alpha-(2-&gt;8)- glycosidic linkages of terminal sialic acid residues in oligosaccharides, glycoproteins, glycolipids, colominic acid and synthetic substrates.. Inhibited by the neuraminidase inhibitors zanamivir (Relenza) and oseltamivir (Tamiflu). These drugs interfere with the release of progeny virus from infected cells and are effective against all influenza strains. Resistance to neuraminidase inhibitors is quite rare. Its function is as follows. Catalyzes the removal of terminal sialic acid residues from viral and cellular glycoconjugates. Cleaves off the terminal sialic acids on the glycosylated HA during virus budding to facilitate virus release. Additionally helps virus spread through the circulation by further removing sialic acids from the cell surface. These cleavages prevent self-aggregation and ensure the efficient spread of the progeny virus from cell to cell. Otherwise, infection would be limited to one round of replication. Described as a receptor-destroying enzyme because it cleaves a terminal sialic acid from the cellular receptors. May facilitate viral invasion of the upper airways by cleaving the sialic acid moieties on the mucin of the airway epithelial cells. Likely to plays a role in the budding process through its association with lipid rafts during intracellular transport. May additionally display a raft-association independent effect on budding. Plays a role in the determination of host range restriction on replication and virulence. Sialidase activity in late endosome/lysosome traffic seems to enhance virus replication. This chain is Neuraminidase, found in Aves (Human).